Reading from the N-terminus, the 926-residue chain is UvrABC system protein A (926 aa).

Gly31–Ser38 lines the ATP pocket. A C4-type zinc finger spans residues Cys251–Cys278. ABC transporter domains follow at residues Ser308–Leu568 and Pro588–Arg916. Gly620–Ser627 contacts ATP. The C4-type zinc finger occupies Cys719 to Cys745.

This sequence belongs to the ABC transporter superfamily. UvrA family. As to quaternary structure, forms a heterotetramer with UvrB during the search for lesions.

It is found in the cytoplasm. In terms of biological role, the UvrABC repair system catalyzes the recognition and processing of DNA lesions. UvrA is an ATPase and a DNA-binding protein. A damage recognition complex composed of 2 UvrA and 2 UvrB subunits scans DNA for abnormalities. When the presence of a lesion has been verified by UvrB, the UvrA molecules dissociate. This Aquifex aeolicus (strain VF5) protein is UvrABC system protein A.